Reading from the N-terminus, the 132-residue chain is Replication enhancer protein (132 aa).

This sequence belongs to the geminiviridae replication enhancer protein family. As to quaternary structure, homooligomer. Interacts with the replication-associated protein (REP). Interacts with host proliferating cell nuclear antigen (PCNA). Interacts with host retinoblastoma-related protein 1 (RBR1), and may thereby deregulate the host cell cycle. Oligomerization and interaction with PCNA are necessary for optimal replication enhancement.

In terms of biological role, increases viral DNA accumulation. Enhances infectivity and symptom expression. The chain is Replication enhancer protein from Potato yellow mosaic virus (isolate Venezuela) (PYMV).